A 150-amino-acid polypeptide reads, in one-letter code: Large ribosomal subunit protein eL19 (150 aa).

A disordered region spans residues 55–89; that stretch reads IKGQSRYRAKIRHEQKKKGRHRGPGSRKGKKTARM.

It belongs to the eukaryotic ribosomal protein eL19 family. As to quaternary structure, part of the 50S ribosomal subunit.

In terms of biological role, binds to the 23S rRNA. The protein is Large ribosomal subunit protein eL19 of Pyrococcus furiosus (strain ATCC 43587 / DSM 3638 / JCM 8422 / Vc1).